The chain runs to 333 residues: MHSSIVLAIVLFVAIASASKTRELCMKSLEHAKVGTSKEAKQDGIDLYKHMFEHYPAMKKYFKHRENYTPADVQKDPFFIKQGQNILLACHVLCATYDDRETFDAYVGELMARHERDHVKIPNDVWNHFWEHFIEFLGSKTTLDEPTKHAWQEIGKEFSHEISHHGRHSVRDHCMNSLEYIAIGDKEHQKQNGIDLYKHMFEHYPHMRKAFKGRENFTKEDVQKDAFFVKQGHKILLALRMLCSSYDDEPTFDYFVDALMDRHIKDDIHLPQEQWHEFWKLFAEYLNEKSHQHLTEAEKHAWSTIGEDFAHEADKHAKAEKDHHEGEHKEEHH.

The signal sequence occupies residues 1 to 18; sequence MHSSIVLAIVLFVAIASA. Globin domains are found at residues 25–167 and 174–318; these read CMKS…HHGR and CMNS…KHAK. Glutamine 82 and histidine 114 together coordinate heme b. Asparagine 216 is a glycosylation site (N-linked (GlcNAc...) asparagine). Positions 231 and 263 each coordinate heme b. The segment at 314 to 333 is disordered; that stretch reads DKHAKAEKDHHEGEHKEEHH.

The protein belongs to the globin family. In terms of assembly, homooctamer.

Its subcellular location is the secreted. The protein resides in the extracellular space. In Pseudoterranova decipiens (Sealworm), this protein is Extracellular globin.